The chain runs to 121 residues: Large ribosomal subunit protein bL12 (121 aa).

Belongs to the bacterial ribosomal protein bL12 family. As to quaternary structure, homodimer. Part of the ribosomal stalk of the 50S ribosomal subunit. Forms a multimeric L10(L12)X complex, where L10 forms an elongated spine to which 2 to 4 L12 dimers bind in a sequential fashion. Binds GTP-bound translation factors.

In terms of biological role, forms part of the ribosomal stalk which helps the ribosome interact with GTP-bound translation factors. Is thus essential for accurate translation. This chain is Large ribosomal subunit protein bL12, found in Streptococcus suis (strain 98HAH33).